Reading from the N-terminus, the 488-residue chain is 3-octaprenyl-4-hydroxybenzoate carboxy-lyase (488 aa).

N172 is a Mn(2+) binding site. Prenylated FMN-binding positions include 175–177, 189–191, and 194–195; these read IYR, RWL, and RG. E238 lines the Mn(2+) pocket. Catalysis depends on D287, which acts as the Proton donor.

It belongs to the UbiD family. Homohexamer. Prenylated FMN serves as cofactor. Requires Mn(2+) as cofactor.

The protein resides in the cell membrane. It catalyses the reaction a 4-hydroxy-3-(all-trans-polyprenyl)benzoate + H(+) = a 2-(all-trans-polyprenyl)phenol + CO2. Its pathway is cofactor biosynthesis; ubiquinone biosynthesis. Its function is as follows. Catalyzes the decarboxylation of 3-octaprenyl-4-hydroxy benzoate to 2-octaprenylphenol, an intermediate step in ubiquinone biosynthesis. The protein is 3-octaprenyl-4-hydroxybenzoate carboxy-lyase of Azotobacter vinelandii (strain DJ / ATCC BAA-1303).